Here is a 297-residue protein sequence, read N- to C-terminus: ATP synthase gamma chain (297 aa).

The protein belongs to the ATPase gamma chain family. F-type ATPases have 2 components, CF(1) - the catalytic core - and CF(0) - the membrane proton channel. CF(1) has five subunits: alpha(3), beta(3), gamma(1), delta(1), epsilon(1). CF(0) has three main subunits: a, b and c.

The protein localises to the cell membrane. Functionally, produces ATP from ADP in the presence of a proton gradient across the membrane. The gamma chain is believed to be important in regulating ATPase activity and the flow of protons through the CF(0) complex. The chain is ATP synthase gamma chain from Renibacterium salmoninarum (strain ATCC 33209 / DSM 20767 / JCM 11484 / NBRC 15589 / NCIMB 2235).